A 753-amino-acid chain; its full sequence is LON peptidase N-terminal domain and RING finger protein 3 (753 aa).

The tract at residues 17 to 57 (GSNNLELAEPEEPGTSAAAGQSAAHPEEVTPEGSQALGAQE) is disordered. The stretch at 72-105 (CKVLLTQADALASEGHLREALEVYRQLSERQQLV) is one TPR 1 repeat. The RING-type 1 zinc-finger motif lies at 159–197 (CKKCHGFLSDPVSLWCGHTFCKLCLERGRAADRRCALCG). TPR repeat units follow at residues 244–277 (ASQL…APND), 279–311 (LLYS…RPMG), and 313–345 (KAHF…DGKN). The tract at residues 351-450 (EAQRENLELP…QGAKPDLSNP (100 aa)) is disordered. Low complexity predominate over residues 363–382 (SNQEGAAAAEESSSLANSAQ). Basic and acidic residues predominate over residues 386–413 (SSKEDRKKDQEGEDRDAASVRTGKCQEK). The segment at 461–499 (CSLCMRLFYEPVTTPCGHTFCLKCLERCLDHNAKCPLCK) adopts an RING-type 2 zinc-finger fold. The region spanning 540 to 749 (MEELSNLNKN…GIRRILAFIS (210 aa)) is the Lon N-terminal domain.

This is LON peptidase N-terminal domain and RING finger protein 3 (Lonrf3) from Mus musculus (Mouse).